The following is a 66-amino-acid chain: Light-harvesting protein B-800-850 alpha chain B (66 aa).

Residues 1–11 (MNQGRIWTVVN) lie on the Cytoplasmic side of the membrane. A helical transmembrane segment spans residues 12–35 (PGVGLPLLLGSVTVIAILVHYAVL). His31 contributes to the a bacteriochlorophyll binding site. The Periplasmic portion of the chain corresponds to 36–66 (SNTTWFPKYWNGATVAAPAAAPAPAAPAAKK).

The protein belongs to the antenna complex alpha subunit family. As to quaternary structure, the core complex is formed by different alpha and beta chains, binding bacteriochlorophyll molecules, and arranged most probably in tetrameric structures disposed around the reaction center. The non-pigmented gamma chains may constitute additional components.

The protein resides in the cell inner membrane. Its function is as follows. Antenna complexes are light-harvesting systems, which transfer the excitation energy to the reaction centers. The chain is Light-harvesting protein B-800-850 alpha chain B (pucAB) from Rhodopseudomonas palustris (strain ATCC BAA-98 / CGA009).